The primary structure comprises 775 residues: Ankyrin repeat and EF-hand domain-containing protein 1 (775 aa).

8 ANK repeats span residues 47-76 (DGLSALHLASISNDTDMVSFLLKLGAHPDV), 184-213 (TGRTALMESSREGVLEIVRGILERGGEVNA), 217-246 (DRHHAAHFAAKGGFFDILKLLFAYNGDMGL), 250-279 (DGNTPLHFAAMGGFADCCKYIAQRGCDLKW), 524-553 (TYKTPLMIACASGNIDVVKFLIEKGANVNA), 557-586 (FLWTPLHFACHAGQQDIVELLVKAGASIDA), 590-619 (NNSTPLSRAIESCRLDTVKYLLDMGAKFQI), and 623-652 (KGHAAMDIAKAYADYRIIDMIKEKLDNLPK).

The chain is Ankyrin repeat and EF-hand domain-containing protein 1 (Ankef1) from Mus musculus (Mouse).